The following is a 695-amino-acid chain: Phenoloxidase subunit 2 (695 aa).

Histidine 215, histidine 219, and histidine 245 together coordinate Cu cation. Catalysis depends on glutamate 353, which acts as the Proton acceptor. The Cu cation site is built by histidine 368, histidine 372, and histidine 408. Cystine bridges form between cysteine 586/cysteine 630 and cysteine 588/cysteine 637.

As to quaternary structure, heterodimer. Forms a complex with an interleukin 1-like protein as a consequence of a host defense response. Cu(2+) serves as cofactor. The N-terminus is blocked. As to expression, synthesized by oenocytoids, a type of hemocyte, and released into the hemolymph plasma.

It is found in the secreted. It catalyses the reaction 2 L-dopa + O2 = 2 L-dopaquinone + 2 H2O. It carries out the reaction L-tyrosine + O2 = L-dopaquinone + H2O. Activated by immulectin and lipopolysaccharide. This is a copper-containing oxidase that functions in the formation of pigments such as melanins and other polyphenolic compounds. Catalyzes the rate-limiting conversions of tyrosine to DOPA, DOPA to DOPA-quinone and possibly 5,6 dihydroxyindole to indole-5'6 quinone. Binds to the surface of hemocytes and is involved in hemocyte melanization. This chain is Phenoloxidase subunit 2, found in Manduca sexta (Tobacco hawkmoth).